The following is a 554-amino-acid chain: Chaperonin GroEL (554 aa).

ATP-binding positions include 29-32, Lys50, 86-90, Gly414, and Asp495; these read TLGP and DGTTT.

The protein belongs to the chaperonin (HSP60) family. As to quaternary structure, forms a cylinder of 14 subunits composed of two heptameric rings stacked back-to-back. Interacts with the co-chaperonin GroES.

The protein localises to the cytoplasm. The catalysed reaction is ATP + H2O + a folded polypeptide = ADP + phosphate + an unfolded polypeptide.. Its function is as follows. Together with its co-chaperonin GroES, plays an essential role in assisting protein folding. The GroEL-GroES system forms a nano-cage that allows encapsulation of the non-native substrate proteins and provides a physical environment optimized to promote and accelerate protein folding. This chain is Chaperonin GroEL, found in Pelagibacter ubique (strain HTCC1062).